A 352-amino-acid chain; its full sequence is Inhibin beta C chain (352 aa).

The signal sequence occupies residues 1–18; the sequence is MASSLLLALLFLTPTTVV. A propeptide spanning residues 19–236 is cleaved from the precursor; that stretch reads NPKTEGPCPA…VEGKHRVRRR (218 aa). Asn-111, Asn-143, Asn-161, and Asn-173 each carry an N-linked (GlcNAc...) asparagine glycan. Intrachain disulfides connect Cys-240–Cys-248, Cys-247–Cys-317, Cys-276–Cys-349, and Cys-280–Cys-351.

This sequence belongs to the TGF-beta family. As to quaternary structure, homodimeric or heterodimeric through association with alpha and beta subunits, linked by one or more disulfide bonds. Inhibins are heterodimers of one alpha and one beta subunit. Activins are homo- or heterodimers of beta subunits only. As to expression, mainly expressed in the adult liver.

It is found in the secreted. Functionally, inhibins and activins inhibit and activate, respectively, the secretion of follitropin by the pituitary gland. Inhibins/activins are involved in regulating a number of diverse functions such as hypothalamic and pituitary hormone secretion, gonadal hormone secretion, germ cell development and maturation, erythroid differentiation, insulin secretion, nerve cell survival, embryonic axial development or bone growth, depending on their subunit composition. Inhibins appear to oppose the functions of activins. This chain is Inhibin beta C chain (Inhbc), found in Mus musculus (Mouse).